The following is an 88-amino-acid chain: Small ribosomal subunit protein bS20 (88 aa).

Belongs to the bacterial ribosomal protein bS20 family.

Functionally, binds directly to 16S ribosomal RNA. This is Small ribosomal subunit protein bS20 from Desulforudis audaxviator (strain MP104C).